Reading from the N-terminus, the 170-residue chain is MTVPSRGETPGPPAQDRLTHIDEAGAARMVDVSGKDVTARTARASGRVLVSPRVVELLRGEGVPKGDALATARIAGIMGAKRTPDLIPLCHPLSVSGVKLDLSVADDAVEILATVKTTDRTGVEMEALTAVSVAALTVIDMVKAVDKGAVITDVRVEEKTGGKSGDWSRS.

Residues 89-91 (LCH) and 125-126 (ME) contribute to the substrate site. Residue aspartate 140 is part of the active site.

It belongs to the MoaC family. As to quaternary structure, homohexamer; trimer of dimers.

It carries out the reaction (8S)-3',8-cyclo-7,8-dihydroguanosine 5'-triphosphate = cyclic pyranopterin phosphate + diphosphate. Its pathway is cofactor biosynthesis; molybdopterin biosynthesis. Catalyzes the conversion of (8S)-3',8-cyclo-7,8-dihydroguanosine 5'-triphosphate to cyclic pyranopterin monophosphate (cPMP). The sequence is that of Cyclic pyranopterin monophosphate synthase from Streptomyces avermitilis (strain ATCC 31267 / DSM 46492 / JCM 5070 / NBRC 14893 / NCIMB 12804 / NRRL 8165 / MA-4680).